The primary structure comprises 310 residues: p-hydroxybenzoic acid efflux pump subunit AaeA (310 aa).

The chain crosses the membrane as a helical span at residues 12–32; that stretch reads AITVVLVILAFIAIFNAWVYY.

This sequence belongs to the membrane fusion protein (MFP) (TC 8.A.1) family.

The protein localises to the cell inner membrane. In terms of biological role, forms an efflux pump with AaeB. The sequence is that of p-hydroxybenzoic acid efflux pump subunit AaeA from Escherichia coli O17:K52:H18 (strain UMN026 / ExPEC).